The following is a 623-amino-acid chain: Serine/threonine-protein kinase ArnS (623 aa).

A run of 2 helical transmembrane segments spans residues 13–33 (MILISVFSYVLIALIVLGIVL) and 49–69 (VYLIGLTVYLNPGFSLTQSLI). One can recognise a Protein kinase domain in the interval 317–623 (YRVIEVIGLG…SYDIVKILEG (307 aa)). Residues 323 to 331 (IGLGGNGYV) and lysine 344 each bind ATP. The Proton acceptor role is filled by aspartate 460.

The protein belongs to the protein kinase superfamily. Ser/Thr protein kinase family. In terms of processing, autophosphorylated.

The protein resides in the cell membrane. It catalyses the reaction L-seryl-[protein] + ATP = O-phospho-L-seryl-[protein] + ADP + H(+). The enzyme catalyses L-threonyl-[protein] + ATP = O-phospho-L-threonyl-[protein] + ADP + H(+). With respect to regulation, autophosphorylation is stimulated by Mn(2+). In terms of biological role, plays an essential role in the controlled expression of archaellum components during starvation-induced motility. May inhibit arnR transcription and promote ArnR translation. In Sulfolobus acidocaldarius (strain ATCC 33909 / DSM 639 / JCM 8929 / NBRC 15157 / NCIMB 11770), this protein is Serine/threonine-protein kinase ArnS.